A 102-amino-acid chain; its full sequence is A-type ATP synthase subunit F (102 aa).

This sequence belongs to the V-ATPase F subunit family. As to quaternary structure, has multiple subunits with at least A(3), B(3), C, D, E, F, H, I and proteolipid K(x).

Its subcellular location is the cell membrane. Its function is as follows. Component of the A-type ATP synthase that produces ATP from ADP in the presence of a proton gradient across the membrane. In Thermococcus sibiricus (strain DSM 12597 / MM 739), this protein is A-type ATP synthase subunit F.